Reading from the N-terminus, the 304-residue chain is Nucleotide-binding protein RHA1_ro07174 (304 aa).

24-31 (GLSGAGLQ) provides a ligand contact to ATP. Residue 75–78 (DVRS) participates in GTP binding.

The protein belongs to the RapZ-like family.

Displays ATPase and GTPase activities. In Rhodococcus jostii (strain RHA1), this protein is Nucleotide-binding protein RHA1_ro07174.